The sequence spans 247 residues: MSGHNKWSTIKHKKGAADAKRGKIFTKIIKEISVAAKLGGGDPAANPRLRTAIDKAKGENMPKDNIERAIKKGTGGMEGVVYEEIVYEGYGPGGVAVLVEVMTDNRNRTVSEVRSIFTKCNGNMGEAGCVAWMFDKKGVISYDTSLDFDQLFEAALEAGAEDVVEEDEQIEVYTEPSSFIEVRDALEAKGFKFQSAEITMIPQTQVALEGKQAESMLKMMDRLEDCDDVQNVYANFDISADEMEKMM.

It belongs to the TACO1 family.

The protein localises to the cytoplasm. This chain is Probable transcriptional regulatory protein Glov_1245, found in Trichlorobacter lovleyi (strain ATCC BAA-1151 / DSM 17278 / SZ) (Geobacter lovleyi).